The sequence spans 105 residues: Large ribosomal subunit protein uL24 (105 aa).

The protein belongs to the universal ribosomal protein uL24 family. In terms of assembly, part of the 50S ribosomal subunit.

In terms of biological role, one of two assembly initiator proteins, it binds directly to the 5'-end of the 23S rRNA, where it nucleates assembly of the 50S subunit. One of the proteins that surrounds the polypeptide exit tunnel on the outside of the subunit. The protein is Large ribosomal subunit protein uL24 of Tolumonas auensis (strain DSM 9187 / NBRC 110442 / TA 4).